The sequence spans 187 residues: Calmodulin-like protein 30 (187 aa).

The segment at 21–47 (KPSRMFSRDRQSSGLSSPGPGGFSQPS) is disordered. Residues 32-47 (SSGLSSPGPGGFSQPS) show a composition bias toward low complexity. EF-hand domains lie at 46–81 (PSVN…LGQE), 82–117 (RAIE…SGGI), 129–152 (FDLN…LGER), and 153–187 (CSLE…SNNV). The Ca(2+) site is built by Asp59, Asp61, Asp63, Lys65, Glu70, Asp95, Asp97, Asp99, Glu106, Asp130, Asn132, Asp134, Lys136, Glu141, Asp166, Asp168, Asp170, and Glu177.

It belongs to the calmodulin family.

Functionally, potential calcium sensor. This is Calmodulin-like protein 30 from Arabidopsis thaliana (Mouse-ear cress).